We begin with the raw amino-acid sequence, 348 residues long: Protein RecA (348 aa).

65-72 (GPESSGKT) contributes to the ATP binding site. The tract at residues 328–348 (SKPQAETSARLATQEELADDY) is disordered.

Belongs to the RecA family.

It localises to the cytoplasm. In terms of biological role, can catalyze the hydrolysis of ATP in the presence of single-stranded DNA, the ATP-dependent uptake of single-stranded DNA by duplex DNA, and the ATP-dependent hybridization of homologous single-stranded DNAs. It interacts with LexA causing its activation and leading to its autocatalytic cleavage. The protein is Protein RecA of Ectopseudomonas oleovorans (Pseudomonas oleovorans).